The chain runs to 5400 residues: Midasin (5400 aa).

AAA-ATPase protomer stretches follow at residues 345-571 (MVSL…HGLP), 656-986 (LLEK…AIKA), 1050-1308 (SYVK…EKVV), 1347-1652 (SMRR…VNMA), 1769-2023 (VLRV…VLRI), and 2074-2347 (IRQN…MMGP). Residues 360–367 (GPSGSGKS), 674–681 (GETGTGKT), 1079–1086 (GPTSSGKT), 1369–1376 (GDTGGGKT), 1786–1793 (GSPGVGKT), and 2095–2102 (GPSSSGKT) contribute to the ATP site. The tract at residues 2435–4569 (IYLSSLGVTD…DGVGAKDVSD (2135 aa)) is linker. Coiled-coil stretches lie at residues 2896–2916 (LERLKLEKKRLEDKMGFSEID), 3233–3253 (AMKITCKLLKLEEKISSLELN), and 3896–3916 (MEQLDLNRKNVETELKEVLKL). 3 disordered regions span residues 4540 to 4890 (EEDD…SSSN), 4905 to 4929 (TLTDNLPKMEFPQNQSSTAQQTKVN), and 4990 to 5069 (QVNT…RMDS). Positions 4576 to 4612 (QLHGTDKKEEEEKEQDDVLGKNKGIEMSDEFDGKEYS) are enriched in basic and acidic residues. Residues 4613–4631 (VSEDEEEDKEDEGSEDEPL) show a composition bias toward acidic residues. Composition is skewed to basic and acidic residues over residues 4641–4652 (DAEKADEKPWNK) and 4661–4687 (MNEKNESGPSIVDKDTRSRELRAKDDG). Composition is skewed to acidic residues over residues 4688-4698 (VETADEPEESN) and 4706-4721 (GNDENVEQDDFDDTDN). The span at 4722 to 4732 (LEEKIQTKEEA) shows a compositional bias: basic and acidic residues. Acidic residues predominate over residues 4740 to 4750 (VDNEQIDDDME). Residues 4751 to 4762 (MDKTEEVEKEDA) show a composition bias toward basic and acidic residues. The segment covering 4779-4798 (GENDQEETQEPSEENMEAEA) has biased composition (acidic residues). Basic and acidic residues predominate over residues 4799-4810 (EDRCGSPQKEEP). The span at 4811–4822 (GNDLEQEPETEP) shows a compositional bias: acidic residues. A compositionally biased stretch (basic and acidic residues) spans 4823-4834 (IEGKEVMSEDMM). Composition is skewed to polar residues over residues 4839 to 4855 (RNDNISGVESGSQNPHG), 4864 to 4874 (TAPQENLSATD), 4916 to 4928 (PQNQSSTAQQTKV), and 5030 to 5040 (SKPSISNSIAE). Positions 5157-5164 (MKKVIPYI) match the Nuclear localization signal motif. The 202-residue stretch at 5186 to 5387 (QVVIAVDDSR…EALPRTLGDV (202 aa)) folds into the VWFA domain. Positions 5271–5291 (VVNLLRNMNEMLENLASTRRQ) form a coiled coil.

It belongs to the midasin family. Associates with pre-60S ribosomes in the nucleoplasm. Constitutively and ubiquitously expressed. Mostly observed in the shoot apex and root tip, and, to a lower extent, in mature seeds, seedling (excluding the hypocotyl), roots, stems, leaves and flowers.

The protein localises to the nucleus. The protein resides in the nucleolus. Its subcellular location is the nucleoplasm. Nuclear chaperone required for maturation and nuclear export of pre-60S ribosome subunits. Functions at successive maturation steps to remove ribosomal factors at critical transition points, first driving the exit of early pre-60S particles from the nucleolus and then driving late pre-60S particles from the nucleus. Required for female gametophyte development. Involved in the expression regulation of genes related to plant growth and development. The protein is Midasin of Arabidopsis thaliana (Mouse-ear cress).